The following is a 357-amino-acid chain: Velvet complex subunit 2 (357 aa).

Positions 32–341 (RRAERKYKLE…AQQGIKIPIR (310 aa)) constitute a Velvet domain.

This sequence belongs to the velvet family. VelB subfamily. In terms of assembly, component of the heterotrimeric velvet complex composed of LAE1, VEL1 and VEL2; VEL1A acting as a bridging protein between LAE1 and VEL2. Forms a heterodimeric complex with VOS1; the formation of the VEL2-VOS1 complex is light-dependent.

The protein localises to the nucleus. Its subcellular location is the cytoplasm. Functionally, component of the velvet transcription factor complex that controls sexual/asexual developmental ratio in response to light, promoting sexual development in the darkness while stimulating asexual sporulation under illumination. The velvet complex acts as a global regulator for secondary metabolite gene expression. Component of the VEL2-VOS1 heterodimeric complex that plays a dual role in activating genes associated with spore maturation and repressing certain development-associated genes. The complex binds DNA through the DNA-binding domain of VOS1 that recognizes an 11-nucleotide consensus sequence 5'-CTGGCCGCGGC-3' consisting of two motifs in the promoters of key developmental regulatory genes. The VEL2-VOS1 complex is required for normal pseudothecium development and regulates asexual spore compartmentalization, pigmentation and germination. In Cochliobolus heterostrophus (strain C5 / ATCC 48332 / race O) (Southern corn leaf blight fungus), this protein is Velvet complex subunit 2.